A 114-amino-acid polypeptide reads, in one-letter code: Iron-sulfur cluster insertion protein ErpA (114 aa).

Cysteine 42, cysteine 106, and cysteine 108 together coordinate iron-sulfur cluster.

The protein belongs to the HesB/IscA family. As to quaternary structure, homodimer. The cofactor is iron-sulfur cluster.

Required for insertion of 4Fe-4S clusters for at least IspG. The sequence is that of Iron-sulfur cluster insertion protein ErpA from Cronobacter sakazakii (strain ATCC BAA-894) (Enterobacter sakazakii).